A 163-amino-acid chain; its full sequence is Epithelial membrane protein 3 (163 aa).

A helical membrane pass occupies residues 4–24 (LLLVVSALHILILVLLFVATL). N-linked (GlcNAc...) asparagine glycans are attached at residues Asn46 and Asn56. 3 helical membrane-spanning segments follow: residues 66–86 (VQALMVLSLILCCLSFILFMI), 100–120 (TGLCQLCTSAAVFSGALIYAI), and 139–159 (FALAWVAFPLALVSGIIYIHL).

It belongs to the PMP-22/EMP/MP20 family.

It localises to the membrane. In terms of biological role, probably involved in cell proliferation and cell-cell interactions. This is Epithelial membrane protein 3 (Emp3) from Rattus norvegicus (Rat).